Reading from the N-terminus, the 424-residue chain is SNF1-related protein kinase regulatory subunit gamma-1 (424 aa).

A2 is subject to N-acetylalanine. S44 carries the phosphoserine modification. CBS domains lie at 63-131 (LSSD…EPPS), 185-244 (TFRW…CAGL), 263-324 (MSKD…YHDY), and 350-408 (IMSG…SGYF).

It belongs to the 5'-AMP-activated protein kinase gamma subunit family. Subunit of a probable heterotrimeric complex consisting of an alpha catalytic (KIN10 or KIN11) subunit, and a beta (KINB) and a gamma (KING or SNF4) non-catalytic regulatory subunits. Interacts with HXK1 in mitochondrion. Post-translationally, sumoylated by SIZ1. As to expression, expressed in vegetative organs and, to lower extent, in reproductive organs.

Its subcellular location is the mitochondrion. In terms of biological role, regulatory subunit of the probable trimeric SNF1-related protein kinase (SnRK) complex, which may play a role in a signal transduction cascade regulating gene expression and carbohydrate metabolism in higher plants. The SnRK complex may also be involved in the regulation of fatty acid synthesis by phosphorylation of acetyl-CoA carboxylase and in assimilation of nitrogen by phosphorylating nitrate reductase. The protein is SNF1-related protein kinase regulatory subunit gamma-1 (KING1) of Arabidopsis thaliana (Mouse-ear cress).